The primary structure comprises 175 residues: Anterior gradient protein 2 homolog (175 aa).

Residues 1-20 (MEKFSVSAILLLVAISGTLA) form the signal peptide. The required to promote cell adhesion stretch occupies residues 21 to 40 (KDTTVKSGAKKDPKDSRPKL). The segment at 24 to 44 (TVKSGAKKDPKDSRPKLPQTL) is disordered. Over residues 29–38 (AKKDPKDSRP) the composition is skewed to basic and acidic residues. Short sequence motifs (homodimer stabilization; interchain) lie at residues 45 to 54 (SRGWGDQLIW) and 60 to 67 (EALYRSKT).

It belongs to the AGR family. Monomer and homodimer. Interacts with LYPD3 and DAG1 (alphaDAG1). Interacts with MUC2; disulfide-linked. As to expression, expressed in lung, skeletal muscle, testis, liver, stomach, colon, small intestine, the goblet cells of the intestine and the mucuous neck cells of the stomach.

The protein localises to the secreted. It is found in the endoplasmic reticulum. Functionally, required for MUC2 post-transcriptional synthesis and secretion. May play a role in the production of mucus by intestinal cells. Proto-oncogene that may play a role in cell migration, cell differentiation and cell growth. Promotes cell adhesion. This chain is Anterior gradient protein 2 homolog (Agr2), found in Mus musculus (Mouse).